The primary structure comprises 123 residues: Small ribosomal subunit protein uS13c (123 aa).

Residues 90–123 (GKRHRNNLPVRGQRTRTNARSRRGSKKTVTGKKK) form a disordered region. Residues 102 to 123 (QRTRTNARSRRGSKKTVTGKKK) show a composition bias toward basic residues.

Belongs to the universal ribosomal protein uS13 family. In terms of assembly, part of the 30S ribosomal subunit.

It localises to the plastid. The protein localises to the chloroplast. In terms of biological role, located at the top of the head of the 30S subunit, it contacts several helices of the 16S rRNA. This Trieres chinensis (Marine centric diatom) protein is Small ribosomal subunit protein uS13c.